The primary structure comprises 81 residues: Three-finger toxin 3FTx-Oxy6 (81 aa).

An N-terminal signal peptide occupies residues 1 to 21 (MKTLLLSLVVMTIVYLDLGYT). 4 disulfides stabilise this stretch: cysteine 24–cysteine 43, cysteine 36–cysteine 61, cysteine 65–cysteine 73, and cysteine 74–cysteine 79.

Belongs to the three-finger toxin family. Short-chain subfamily. As to expression, expressed by the venom gland.

The protein resides in the secreted. The polypeptide is Three-finger toxin 3FTx-Oxy6 (Oxyuranus microlepidotus (Inland taipan)).